The primary structure comprises 351 residues: D-alanine--D-alanine ligase (351 aa).

The ATP-grasp domain maps to 135–343; that stretch reads NQIFLQSGQK…MEEVFADLIE (209 aa). Residue 167-222 coordinates ATP; it reads LMSLGFPQFLKPVEGGSSVSTYKITNQEQLSRQLALIFESDSKVMSQSFLAGTEVS. D298, E310, and N312 together coordinate Mg(2+).

This sequence belongs to the D-alanine--D-alanine ligase family. The cofactor is Mg(2+). Requires Mn(2+) as cofactor.

It is found in the cytoplasm. It carries out the reaction 2 D-alanine + ATP = D-alanyl-D-alanine + ADP + phosphate + H(+). Its pathway is cell wall biogenesis; peptidoglycan biosynthesis. Functionally, cell wall formation. The sequence is that of D-alanine--D-alanine ligase from Leptospira borgpetersenii serovar Hardjo-bovis (strain JB197).